Here is a 341-residue protein sequence, read N- to C-terminus: MSFPYSLKPFNTFGVEQSCLSMIEVHSKAELQSTCLSLYQSKRPMLVLGGGSNIVFTDDFNGTVVRVLTKGISCSEDGTHFYLAVEAGENWHELVQFSLNQNMPGLENLALIPGTVGAAPIQNIGAYGVELCDICDWVEYLDLESGNLLRLTTDECEFAYRESIFKGSLRDKAVITAVGLRLPKAWHPKLAYGPLQSFNAETVTSREIFDRVCEVRSEKLPNPEELGNAGSFFKNPIVSAATYMQLAAHFPSIVGYAQPNGEVKLAAGWLIEHAGLKGFALGNAGVHAKQALVLVNLGHATGQDICRLALHVIARVNEVFGVKLEAEPRIMGLTGETSLDV.

Residues 13 to 185 (FGVEQSCLSM…TAVGLRLPKA (173 aa)) form the FAD-binding PCMH-type domain. Residue R161 is part of the active site. S231 serves as the catalytic Proton donor. E327 is an active-site residue.

This sequence belongs to the MurB family. It depends on FAD as a cofactor.

The protein resides in the cytoplasm. The enzyme catalyses UDP-N-acetyl-alpha-D-muramate + NADP(+) = UDP-N-acetyl-3-O-(1-carboxyvinyl)-alpha-D-glucosamine + NADPH + H(+). It participates in cell wall biogenesis; peptidoglycan biosynthesis. In terms of biological role, cell wall formation. The chain is UDP-N-acetylenolpyruvoylglucosamine reductase from Shewanella sp. (strain MR-7).